Reading from the N-terminus, the 228-residue chain is Protein-L-isoaspartate O-methyltransferase (228 aa).

The tract at residues 1-20 is disordered; that stretch reads MVAVSLKMSQPAAPPPPMGE. The active site involves Ser76.

It belongs to the methyltransferase superfamily. L-isoaspartyl/D-aspartyl protein methyltransferase family.

It is found in the cytoplasm. It catalyses the reaction [protein]-L-isoaspartate + S-adenosyl-L-methionine = [protein]-L-isoaspartate alpha-methyl ester + S-adenosyl-L-homocysteine. Catalyzes the methyl esterification of L-isoaspartyl residues in peptides and proteins that result from spontaneous decomposition of normal L-aspartyl and L-asparaginyl residues. It plays a role in the repair and/or degradation of damaged proteins. This Magnetococcus marinus (strain ATCC BAA-1437 / JCM 17883 / MC-1) protein is Protein-L-isoaspartate O-methyltransferase.